The primary structure comprises 212 residues: Putative tyrosine-protein phosphatase OCA1 (212 aa).

The disordered stretch occupies residues 1-27 (MSNKDTSILKGNVDHEEADSNPKLRKI). The segment covering 12–22 (NVDHEEADSNP) has biased composition (basic and acidic residues). The 169-residue stretch at 40–208 (NFCPVERQLY…SVEIDPSKVP (169 aa)) folds into the Tyrosine-protein phosphatase domain. C146 functions as the Phosphocysteine intermediate in the catalytic mechanism.

This sequence belongs to the protein-tyrosine phosphatase family.

The protein resides in the cytoplasm. It carries out the reaction O-phospho-L-tyrosyl-[protein] + H2O = L-tyrosyl-[protein] + phosphate. Putative tyrosine-protein phosphatase required for protection against superoxide stress. This Scheffersomyces stipitis (strain ATCC 58785 / CBS 6054 / NBRC 10063 / NRRL Y-11545) (Yeast) protein is Putative tyrosine-protein phosphatase OCA1 (OCA1).